Here is a 154-residue protein sequence, read N- to C-terminus: Aspartate carbamoyltransferase regulatory chain (154 aa).

4 residues coordinate Zn(2+): C109, C114, C138, and C141.

It belongs to the PyrI family. Contains catalytic and regulatory chains. It depends on Zn(2+) as a cofactor.

Involved in allosteric regulation of aspartate carbamoyltransferase. In Aeromonas hydrophila subsp. hydrophila (strain ATCC 7966 / DSM 30187 / BCRC 13018 / CCUG 14551 / JCM 1027 / KCTC 2358 / NCIMB 9240 / NCTC 8049), this protein is Aspartate carbamoyltransferase regulatory chain.